Reading from the N-terminus, the 255-residue chain is Pre-miRNA 5'-monophosphate methyltransferase (255 aa).

S-adenosyl-L-methionine-binding positions include arginine 32, asparagine 66, aspartate 96, 121–122 (DI), and methionine 150. The Bin3-type SAM domain occupies 41–253 (LHKLFRKPAE…SLLLFKIQRH (213 aa)).

It belongs to the methyltransferase superfamily.

The protein localises to the cytoplasm. It catalyses the reaction a 5'-end 5'-phospho-ribonucleoside-RNA + S-adenosyl-L-methionine = a 5'-end (5'-methylphospho)-ribonucleoside-RNA + S-adenosyl-L-homocysteine. The enzyme catalyses a 5'-end 5'-phospho-ribonucleoside-RNA + 2 S-adenosyl-L-methionine = a 5'-end (5'-bismethylphospho)-ribonucleoside-RNA + 2 S-adenosyl-L-homocysteine. Functionally, O-methyltransferase that specifically monomethylates 5'-monophosphate of cytoplasmic histidyl tRNA (tRNA(His)), acting as a capping enzyme by protecting tRNA(His) from cleavage by DICER1. Also able, with less efficiently, to methylate the 5' monophosphate of a subset of pre-miRNAs, acting as a negative regulator of miRNA processing. The 5' monophosphate of pre-miRNAs is recognized by DICER1 and is required for pre-miRNAs processing: methylation at this position reduces the processing of pre-miRNAs by DICER1. Was also reported to mediate dimethylation of pre-miR-145; however dimethylation cannot be reproduced by another group which observes a monomethylation of pre-miR-145. This Xenopus laevis (African clawed frog) protein is Pre-miRNA 5'-monophosphate methyltransferase (bcdin3d).